We begin with the raw amino-acid sequence, 667 residues long: Protein angel homolog 1 (667 aa).

Serine 77 and serine 105 each carry phosphoserine.

This sequence belongs to the CCR4/nocturin family.

The chain is Protein angel homolog 1 from Rattus norvegicus (Rat).